Consider the following 206-residue polypeptide: FKBP-type 22 kDa peptidyl-prolyl cis-trans isomerase (206 aa).

The PPIase FKBP-type domain maps to 120 to 206 (TDRVRVHYTG…VFEVELLEIL (87 aa)).

Homodimer.

It localises to the cytoplasm. The protein resides in the periplasm. The enzyme catalyses [protein]-peptidylproline (omega=180) = [protein]-peptidylproline (omega=0). Strongly inhibited by FK506. In terms of biological role, PPIases accelerate the folding of proteins. Catalyzes the cis-trans isomerization of proline imidic peptide bonds in oligopeptides. Displays a preference for substrates with a lysyl residue in the P1 position. This chain is FKBP-type 22 kDa peptidyl-prolyl cis-trans isomerase (fklB), found in Escherichia coli (strain K12).